A 526-amino-acid chain; its full sequence is Triacylglycerol lipase OBL1 (526 aa).

A helical transmembrane segment spans residues 79–99 (GHLTDFLLNFYYQNHGFLGIL). Residues 338-342 (GHSLG) carry the GXSXG motif. Ser-340 acts as the Nucleophile in catalysis. Active-site charge relay system residues include Asp-404 and His-497.

Belongs to the AB hydrolase superfamily. Lipase family.

The protein localises to the membrane. It carries out the reaction a triacylglycerol + H2O = a diacylglycerol + a fatty acid + H(+). Functionally, acid lipase that can hydrolyze a range of triacylglycerols but is not active on phospholipids. In vitro, hydrolyzes triolein, trilinolein, triricinolein, tripalmitin, trilaurin and tricaprin. May play a role in the regulation of lipolysis in germinating seeds. In Ricinus communis (Castor bean), this protein is Triacylglycerol lipase OBL1.